The primary structure comprises 147 residues: 3-dehydroquinate dehydratase 1 (147 aa).

Residue Tyr-23 is the Proton acceptor of the active site. Substrate-binding residues include Asn-75, His-81, and Asp-88. His-101 acts as the Proton donor in catalysis. Substrate contacts are provided by residues 102 to 103 (LS) and Arg-112.

This sequence belongs to the type-II 3-dehydroquinase family. In terms of assembly, homododecamer.

It catalyses the reaction 3-dehydroquinate = 3-dehydroshikimate + H2O. Its pathway is metabolic intermediate biosynthesis; chorismate biosynthesis; chorismate from D-erythrose 4-phosphate and phosphoenolpyruvate: step 3/7. Catalyzes a trans-dehydration via an enolate intermediate. The chain is 3-dehydroquinate dehydratase 1 (aroQ1) from Pseudomonas aeruginosa (strain ATCC 15692 / DSM 22644 / CIP 104116 / JCM 14847 / LMG 12228 / 1C / PRS 101 / PAO1).